The chain runs to 260 residues: Small ribosomal subunit protein eS1 (260 aa).

Position 30 is an N6-acetyllysine; alternate (Lys30). Residue Lys30 forms a Glycyl lysine isopeptide (Lys-Gly) (interchain with G-Cter in SUMO2); alternate linkage. Lys52 is modified (N6-acetyllysine). Tyr151 is modified (ADP-ribosyltyrosine). The interval His228–Val260 is disordered. A phosphoserine mark is found at Ser232 and Ser233. The segment covering Thr238–Gly251 has biased composition (basic and acidic residues). Lys245 carries the post-translational modification N6-acetyllysine; alternate. Lys245 participates in a covalent cross-link: Glycyl lysine isopeptide (Lys-Gly) (interchain with G-Cter in SUMO2); alternate. Tyr252 is subject to Phosphotyrosine. The residue at position 259 (Ser259) is a Phosphoserine.

The protein belongs to the eukaryotic ribosomal protein eS1 family. As to quaternary structure, component of the small ribosomal subunit. Mature ribosomes consist of a small (40S) and a large (60S) subunit. The 40S subunit contains about 33 different proteins and 1 molecule of RNA (18S). The 60S subunit contains about 49 different proteins and 3 molecules of RNA (28S, 5.8S and 5S). Identified in a IGF2BP1-dependent mRNP granule complex containing untranslated mRNAs. Binds with high affinity to IPO4. Interacts with DDIT3. Part of the small subunit (SSU) processome, composed of more than 70 proteins and the RNA chaperone small nucleolar RNA (snoRNA) U3. ADP-ribosylated at Tyr-151 by PARP1 in presence of HPF1.

It localises to the cytoplasm. The protein localises to the nucleus. The protein resides in the nucleolus. Component of the small ribosomal subunit. The ribosome is a large ribonucleoprotein complex responsible for the synthesis of proteins in the cell. Part of the small subunit (SSU) processome, first precursor of the small eukaryotic ribosomal subunit. During the assembly of the SSU processome in the nucleolus, many ribosome biogenesis factors, an RNA chaperone and ribosomal proteins associate with the nascent pre-rRNA and work in concert to generate RNA folding, modifications, rearrangements and cleavage as well as targeted degradation of pre-ribosomal RNA by the RNA exosome. May play a role during erythropoiesis through regulation of transcription factor DDIT3. This is Small ribosomal subunit protein eS1 from Felis catus (Cat).